We begin with the raw amino-acid sequence, 316 residues long: MEKLAEEIINGRRLTRSDDLEFLLTCDLKKICDGANKIRKTLCGESVDLCTIINGRSGKCSENCKFCAQSNHHKTEIKKYDFLDPNVILKDCKKNEANGVHRYSIVTAGRALVGSDFDKAVQAYKMMNKECSINLCASHGFLSEEQFVLLKEAGVTMYHANIETSKRNFHNICTTHSYDDKIKEIKLAQNAGLKVCSGGIIGMGETWYDRIDMAISLSELGVISIPINVLMPIKGTPLENLKRISNYDILRTIAIFRYINPTAYIRMAAGRTYFEDGGIEIFQSGSNATITGDMLTTVGNNTCQDKIMLQTLGFSI.

Residues 42 to 268 (LCGESVDLCT…INPTAYIRMA (227 aa)) form the Radical SAM core domain. The [4Fe-4S] cluster site is built by cysteine 60, cysteine 64, and cysteine 67. [2Fe-2S] cluster-binding residues include serine 104, cysteine 136, cysteine 196, and arginine 266.

Belongs to the radical SAM superfamily. Biotin synthase family. As to quaternary structure, homodimer. It depends on [4Fe-4S] cluster as a cofactor. The cofactor is [2Fe-2S] cluster.

It carries out the reaction (4R,5S)-dethiobiotin + (sulfur carrier)-SH + 2 reduced [2Fe-2S]-[ferredoxin] + 2 S-adenosyl-L-methionine = (sulfur carrier)-H + biotin + 2 5'-deoxyadenosine + 2 L-methionine + 2 oxidized [2Fe-2S]-[ferredoxin]. It participates in cofactor biosynthesis; biotin biosynthesis; biotin from 7,8-diaminononanoate: step 2/2. Its function is as follows. Catalyzes the conversion of dethiobiotin (DTB) to biotin by the insertion of a sulfur atom into dethiobiotin via a radical-based mechanism. The chain is Biotin synthase from Clostridium beijerinckii (strain ATCC 51743 / NCIMB 8052) (Clostridium acetobutylicum).